The following is a 409-amino-acid chain: Phosphatidylserine decarboxylase proenzyme, mitochondrial (409 aa).

The N-terminal 52 residues, Met1–Lys52, are a transit peptide targeting the mitochondrion. Residues Gln36–Ala103 are necessary for localization to both lipid droplets and mitochondria. The Mitochondrial matrix segment spans residues Ile53 to Leu63. A helical transmembrane segment spans residues Leu64–Gln82. Residues Tyr83 to Leu409 are Mitochondrial intermembrane-facing. Active-site charge relay system; for autoendoproteolytic cleavage activity residues include Asp191, His267, and Ser378. Ser378 serves as the catalytic Schiff-base intermediate with substrate; via pyruvic acid; for decarboxylase activity. Ser378 carries the pyruvic acid (Ser); by autocatalysis modification.

This sequence belongs to the phosphatidylserine decarboxylase family. PSD-B subfamily. Eukaryotic type I sub-subfamily. As to quaternary structure, heterodimer of a large membrane-associated beta subunit and a small pyruvoyl-containing alpha subunit. The cofactor is pyruvate. In terms of processing, is synthesized initially as an inactive proenzyme. Formation of the active enzyme involves a self-maturation process in which the active site pyruvoyl group is generated from an internal serine residue via an autocatalytic post-translational modification. Two non-identical subunits are generated from the proenzyme in this reaction, and the pyruvate is formed at the N-terminus of the alpha chain, which is derived from the carboxyl end of the proenzyme. The autoendoproteolytic cleavage occurs by a canonical serine protease mechanism, in which the side chain hydroxyl group of the serine supplies its oxygen atom to form the C-terminus of the beta chain, while the remainder of the serine residue undergoes an oxidative deamination to produce ammonia and the pyruvoyl prosthetic group on the alpha chain. During this reaction, the Ser that is part of the protease active site of the proenzyme becomes the pyruvoyl prosthetic group, which constitutes an essential element of the active site of the mature decarboxylase.

The protein localises to the mitochondrion inner membrane. It is found in the cytoplasm. Its subcellular location is the lipid droplet. The catalysed reaction is a 1,2-diacyl-sn-glycero-3-phospho-L-serine + H(+) = a 1,2-diacyl-sn-glycero-3-phosphoethanolamine + CO2. It functions in the pathway phospholipid metabolism; phosphatidylethanolamine biosynthesis. In terms of biological role, catalyzes the formation of phosphatidylethanolamine (PtdEtn) from phosphatidylserine (PtdSer). Plays a central role in phospholipid metabolism and in the interorganelle trafficking of phosphatidylserine. May be involved in lipid droplet biogenesis at the endoplasmic reticulum membrane. This is Phosphatidylserine decarboxylase proenzyme, mitochondrial from Homo sapiens (Human).